Here is a 440-residue protein sequence, read N- to C-terminus: Ribosomal protein uS12 methylthiotransferase RimO (440 aa).

Positions 5–116 constitute an MTTase N-terminal domain; sequence PTIAISHLGC…IVNVIERAEQ (112 aa). [4Fe-4S] cluster is bound by residues Cys-14, Cys-50, Cys-79, Cys-154, Cys-158, and Cys-161. The Radical SAM core domain maps to 140–370; that stretch reads TTTEGVAYLR…ALQQPISWRK (231 aa). One can recognise a TRAM domain in the interval 372–438; sequence QQEVGKTVEV…EYDLFGQVVS (67 aa).

Belongs to the methylthiotransferase family. RimO subfamily. [4Fe-4S] cluster serves as cofactor.

It localises to the cytoplasm. It carries out the reaction L-aspartate(89)-[ribosomal protein uS12]-hydrogen + (sulfur carrier)-SH + AH2 + 2 S-adenosyl-L-methionine = 3-methylsulfanyl-L-aspartate(89)-[ribosomal protein uS12]-hydrogen + (sulfur carrier)-H + 5'-deoxyadenosine + L-methionine + A + S-adenosyl-L-homocysteine + 2 H(+). Functionally, catalyzes the methylthiolation of an aspartic acid residue of ribosomal protein uS12. The sequence is that of Ribosomal protein uS12 methylthiotransferase RimO from Trichormus variabilis (strain ATCC 29413 / PCC 7937) (Anabaena variabilis).